The primary structure comprises 118 residues: Large ribosomal subunit protein bL19 (118 aa).

Belongs to the bacterial ribosomal protein bL19 family.

Functionally, this protein is located at the 30S-50S ribosomal subunit interface and may play a role in the structure and function of the aminoacyl-tRNA binding site. This is Large ribosomal subunit protein bL19 from Lactiplantibacillus plantarum (strain ATCC BAA-793 / NCIMB 8826 / WCFS1) (Lactobacillus plantarum).